We begin with the raw amino-acid sequence, 269 residues long: Putative pyruvate, phosphate dikinase regulatory protein (269 aa).

153–160 lines the ADP pocket; it reads GVSRTSKT.

The protein belongs to the pyruvate, phosphate/water dikinase regulatory protein family. PDRP subfamily.

The enzyme catalyses N(tele)-phospho-L-histidyl/L-threonyl-[pyruvate, phosphate dikinase] + ADP = N(tele)-phospho-L-histidyl/O-phospho-L-threonyl-[pyruvate, phosphate dikinase] + AMP + H(+). The catalysed reaction is N(tele)-phospho-L-histidyl/O-phospho-L-threonyl-[pyruvate, phosphate dikinase] + phosphate + H(+) = N(tele)-phospho-L-histidyl/L-threonyl-[pyruvate, phosphate dikinase] + diphosphate. Bifunctional serine/threonine kinase and phosphorylase involved in the regulation of the pyruvate, phosphate dikinase (PPDK) by catalyzing its phosphorylation/dephosphorylation. This chain is Putative pyruvate, phosphate dikinase regulatory protein, found in Pediococcus pentosaceus (strain ATCC 25745 / CCUG 21536 / LMG 10740 / 183-1w).